Consider the following 311-residue polypeptide: D-allose-binding periplasmic protein (311 aa).

Residues 1–23 form the signal peptide; it reads MNKYLKYFSGTLVGLMLSTSAFA.

Belongs to the bacterial solute-binding protein 2 family.

It is found in the periplasm. Functionally, part of the binding-protein-dependent transport system AlsBAC for D-allose. The chain is D-allose-binding periplasmic protein (alsB) from Escherichia coli (strain K12).